A 105-amino-acid polypeptide reads, in one-letter code: MSKLRKGDTVIVIAGKDKGKQGTVQAVKNDRIKVEGINIVTKHQKPNQATGVEGGILKQEAFLHISNVAILNAQTQKADRITYQFGEDGKKQRLYRSNGEVVATA.

Belongs to the universal ribosomal protein uL24 family. As to quaternary structure, part of the 50S ribosomal subunit.

One of two assembly initiator proteins, it binds directly to the 5'-end of the 23S rRNA, where it nucleates assembly of the 50S subunit. In terms of biological role, one of the proteins that surrounds the polypeptide exit tunnel on the outside of the subunit. The protein is Large ribosomal subunit protein uL24 of Psychrobacter cryohalolentis (strain ATCC BAA-1226 / DSM 17306 / VKM B-2378 / K5).